A 928-amino-acid polypeptide reads, in one-letter code: DNA mismatch repair protein MutS (928 aa).

Position 613 to 620 (613 to 620 (GPNMAGKS)) interacts with ATP. The span at 854 to 872 (KAKSNKDDHRIDEKTENSS) shows a compositional bias: basic and acidic residues. The segment at 854–880 (KAKSNKDDHRIDEKTENSSKKHKNKDS) is disordered.

The protein belongs to the DNA mismatch repair MutS family.

This protein is involved in the repair of mismatches in DNA. It is possible that it carries out the mismatch recognition step. This protein has a weak ATPase activity. The protein is DNA mismatch repair protein MutS of Clostridium beijerinckii (strain ATCC 51743 / NCIMB 8052) (Clostridium acetobutylicum).